Consider the following 137-residue polypeptide: Protein BNS1 (137 aa).

Component of the FEAR (CDC14 early anaphase release) network which promotes CDC14 release from the nucleolus during early anaphase and is required for the efficient segregation of telomeric and nucleolar regions. Although BNS1 can partially compensate for a lack of SPO12 function when overexpressed, it does not appear to play any role in controlling meiotic nuclear division. This is Protein BNS1 (BNS1) from Saccharomyces cerevisiae (strain ATCC 204508 / S288c) (Baker's yeast).